A 274-amino-acid polypeptide reads, in one-letter code: Putative ABC transporter ATP-binding protein alr3946 (274 aa).

One can recognise an ABC transporter domain in the interval 6–242; it reads LTFEQVYYTY…REILDSIELG (237 aa). 40–47 contacts ATP; the sequence is GRNGCGKT.

The protein belongs to the ABC transporter superfamily.

The protein localises to the cell inner membrane. Functionally, probably part of an ABC transporter complex. Responsible for energy coupling to the transport system. The chain is Putative ABC transporter ATP-binding protein alr3946 from Nostoc sp. (strain PCC 7120 / SAG 25.82 / UTEX 2576).